A 393-amino-acid polypeptide reads, in one-letter code: S-adenosylmethionine synthase (393 aa).

Position 16 (His16) interacts with ATP. Asp18 contacts Mg(2+). Position 44 (Glu44) interacts with K(+). Residues Glu57 and Gln100 each contribute to the L-methionine site. The interval 100-110 (QSPDIVMGVDG) is flexible loop. Residues 165-167 (DAK), 231-232 (RF), Asp240, 246-247 (RK), and Lys267 each bind ATP. Residue Asp240 participates in L-methionine binding. Residue Lys271 participates in L-methionine binding.

This sequence belongs to the AdoMet synthase family. Homotetramer; dimer of dimers. The cofactor is Mg(2+). K(+) is required as a cofactor.

The protein localises to the cytoplasm. The catalysed reaction is L-methionine + ATP + H2O = S-adenosyl-L-methionine + phosphate + diphosphate. Its pathway is amino-acid biosynthesis; S-adenosyl-L-methionine biosynthesis; S-adenosyl-L-methionine from L-methionine: step 1/1. Its function is as follows. Catalyzes the formation of S-adenosylmethionine (AdoMet) from methionine and ATP. The overall synthetic reaction is composed of two sequential steps, AdoMet formation and the subsequent tripolyphosphate hydrolysis which occurs prior to release of AdoMet from the enzyme. The sequence is that of S-adenosylmethionine synthase from Coxiella burnetii (strain CbuG_Q212) (Coxiella burnetii (strain Q212)).